Consider the following 254-residue polypeptide: Sugar fermentation stimulation protein homolog (254 aa).

Belongs to the SfsA family.

This is Sugar fermentation stimulation protein homolog from Synechococcus sp. (strain CC9605).